The sequence spans 634 residues: DNA-directed RNA polymerase subunit gamma (634 aa).

Zn(2+)-binding residues include cysteine 74, cysteine 76, cysteine 89, and cysteine 92. Residues aspartate 471, aspartate 473, and aspartate 475 each coordinate Mg(2+).

The protein belongs to the RNA polymerase beta' chain family. RpoC1 subfamily. In cyanobacteria the RNAP catalytic core is composed of 2 alpha, 1 beta, 1 beta', 1 gamma and 1 omega subunit. When a sigma factor is associated with the core the holoenzyme is formed, which can initiate transcription. It depends on Mg(2+) as a cofactor. Zn(2+) serves as cofactor.

The enzyme catalyses RNA(n) + a ribonucleoside 5'-triphosphate = RNA(n+1) + diphosphate. Its function is as follows. DNA-dependent RNA polymerase catalyzes the transcription of DNA into RNA using the four ribonucleoside triphosphates as substrates. This is DNA-directed RNA polymerase subunit gamma from Prochlorococcus marinus (strain SARG / CCMP1375 / SS120).